The chain runs to 257 residues: UPF0246 protein Shew185_1115 (257 aa).

Belongs to the UPF0246 family.

The sequence is that of UPF0246 protein Shew185_1115 from Shewanella baltica (strain OS185).